Reading from the N-terminus, the 700-residue chain is Elongation factor G (700 aa).

Positions 10–285 constitute a tr-type G domain; that stretch reads DRTRNIGIMA…AVIDYLPSPL (276 aa). GTP-binding positions include 19–26, 83–87, and 137–140; these read AHIDAGKT, DTPGH, and NKMD.

It belongs to the TRAFAC class translation factor GTPase superfamily. Classic translation factor GTPase family. EF-G/EF-2 subfamily.

Its subcellular location is the cytoplasm. Its function is as follows. Catalyzes the GTP-dependent ribosomal translocation step during translation elongation. During this step, the ribosome changes from the pre-translocational (PRE) to the post-translocational (POST) state as the newly formed A-site-bound peptidyl-tRNA and P-site-bound deacylated tRNA move to the P and E sites, respectively. Catalyzes the coordinated movement of the two tRNA molecules, the mRNA and conformational changes in the ribosome. The chain is Elongation factor G from Lacticaseibacillus paracasei (strain ATCC 334 / BCRC 17002 / CCUG 31169 / CIP 107868 / KCTC 3260 / NRRL B-441) (Lactobacillus paracasei).